We begin with the raw amino-acid sequence, 103 residues long: Small ribosomal subunit protein uS14c (103 aa).

The interval 34–56 (KVSPLSLSEKTKMQEKLQSLPRN) is disordered.

Belongs to the universal ribosomal protein uS14 family. In terms of assembly, part of the 30S ribosomal subunit.

It is found in the plastid. The protein localises to the chloroplast. Functionally, binds 16S rRNA, required for the assembly of 30S particles. The polypeptide is Small ribosomal subunit protein uS14c (Saccharum hybrid (Sugarcane)).